A 92-amino-acid chain; its full sequence is Probable Fe(2+)-trafficking protein (92 aa).

Belongs to the Fe(2+)-trafficking protein family.

Could be a mediator in iron transactions between iron acquisition and iron-requiring processes, such as synthesis and/or repair of Fe-S clusters in biosynthetic enzymes. In Shewanella piezotolerans (strain WP3 / JCM 13877), this protein is Probable Fe(2+)-trafficking protein.